The primary structure comprises 152 residues: 2-C-methyl-D-erythritol 2,4-cyclodiphosphate synthase (152 aa).

A divalent metal cation contacts are provided by Asp8 and His10. 4-CDP-2-C-methyl-D-erythritol 2-phosphate is bound by residues 8–10 (DSH) and 34–35 (HS). His42 lines the a divalent metal cation pocket. 4-CDP-2-C-methyl-D-erythritol 2-phosphate contacts are provided by residues 56-58 (DIG), 61-65 (FPDTD), 100-106 (LDRPKLG), and 131-135 (FKTSE).

Belongs to the IspF family. Homotrimer. Requires a divalent metal cation as cofactor.

It catalyses the reaction 4-CDP-2-C-methyl-D-erythritol 2-phosphate = 2-C-methyl-D-erythritol 2,4-cyclic diphosphate + CMP. It participates in isoprenoid biosynthesis; isopentenyl diphosphate biosynthesis via DXP pathway; isopentenyl diphosphate from 1-deoxy-D-xylulose 5-phosphate: step 4/6. In terms of biological role, involved in the biosynthesis of isopentenyl diphosphate (IPP) and dimethylallyl diphosphate (DMAPP), two major building blocks of isoprenoid compounds. Catalyzes the conversion of 4-diphosphocytidyl-2-C-methyl-D-erythritol 2-phosphate (CDP-ME2P) to 2-C-methyl-D-erythritol 2,4-cyclodiphosphate (ME-CPP) with a corresponding release of cytidine 5-monophosphate (CMP). The sequence is that of 2-C-methyl-D-erythritol 2,4-cyclodiphosphate synthase from Thermus thermophilus (strain ATCC 27634 / DSM 579 / HB8).